The following is a 392-amino-acid chain: Chorismate synthase (392 aa).

Positions 40 and 46 each coordinate NADP(+). FMN is bound by residues 135–137 (RAS), 256–257 (QA), G300, 315–319 (KPIAT), and R341.

The protein belongs to the chorismate synthase family. As to quaternary structure, homotetramer. Requires FMNH2 as cofactor.

It carries out the reaction 5-O-(1-carboxyvinyl)-3-phosphoshikimate = chorismate + phosphate. It participates in metabolic intermediate biosynthesis; chorismate biosynthesis; chorismate from D-erythrose 4-phosphate and phosphoenolpyruvate: step 7/7. In terms of biological role, catalyzes the anti-1,4-elimination of the C-3 phosphate and the C-6 proR hydrogen from 5-enolpyruvylshikimate-3-phosphate (EPSP) to yield chorismate, which is the branch point compound that serves as the starting substrate for the three terminal pathways of aromatic amino acid biosynthesis. This reaction introduces a second double bond into the aromatic ring system. In Nocardioides sp. (strain ATCC BAA-499 / JS614), this protein is Chorismate synthase.